The following is a 374-amino-acid chain: Relaxin-3 receptor 2 (374 aa).

Over 1 to 43 (MPTLNTSASPPTFFWANASGGSVLSADDAPMPVKFLALRLMVA) the chain is Extracellular. N-linked (GlcNAc...) asparagine glycans are attached at residues N5 and N17. The chain crosses the membrane as a helical span at residues 44–64 (LAYGLVGAIGLLGNLAVLWVL). At 65 to 78 (SNCARRAPGPPSDT) the chain is on the cytoplasmic side. A helical transmembrane segment spans residues 79–99 (FVFNLALADLGLALTLPFWAA). Over 100–116 (ESALDFHWPFGGALCKM) the chain is Extracellular. A disulfide bridge connects residues C114 and C191. The helical transmembrane segment at 117–137 (VLTATVLNVYASIFLITALSV) threads the bilayer. Topologically, residues 138–154 (ARYWVVAMAAGPGTHLS) are cytoplasmic. Residues 155-175 (LFWARIATLAVWAAAALVTVP) traverse the membrane as a helical segment. The Extracellular portion of the chain corresponds to 176-209 (TAVFGVEGEVCGVRLCLLRFPSRYWLGAYQLQRV). A helical transmembrane segment spans residues 210 to 230 (VLAFMVPLGVITTSYLLLLAF). The Cytoplasmic segment spans residues 231-249 (LQRRQRRRQDSRVVARSVR). A helical membrane pass occupies residues 250 to 270 (ILVASFFLCWFPNHVVTLWGV). Over 271 to 281 (LVKFDLVPWNS) the chain is Extracellular. A helical membrane pass occupies residues 282–302 (TFYTIQTYVFPVTTCLAHSNS). The Cytoplasmic portion of the chain corresponds to 303 to 374 (CLNPVLYCLL…LTNLDRGTPG (72 aa)).

Belongs to the G-protein coupled receptor 1 family. In terms of tissue distribution, expressed in a broader range of tissues including brain, kidney, testis, thymus, placenta, prostate, salivary gland, thyroid and colon.

The protein localises to the cell membrane. High affinity receptor for INSL5. Also acts as a receptor for RLN3/relaxin-3, as well as bradykinin and kallidin. Binding of the ligand inhibit cAMP accumulation. This is Relaxin-3 receptor 2 (RXFP4) from Homo sapiens (Human).